The following is a 324-amino-acid chain: Methenyltetrahydromethanopterin cyclohydrolase (324 aa).

Belongs to the MCH family.

It is found in the cytoplasm. The catalysed reaction is 5,10-methenyl-5,6,7,8-tetrahydromethanopterin + H2O = N(5)-formyl-5,6,7,8-tetrahydromethanopterin + H(+). The protein operates within one-carbon metabolism; methanogenesis from CO(2); 5,10-methenyl-5,6,7,8-tetrahydromethanopterin from CO(2): step 3/3. Catalyzes the reversible interconversion of 5-formyl-H(4)MPT to methenyl-H(4)MPT(+). The polypeptide is Methenyltetrahydromethanopterin cyclohydrolase (Methanococcus aeolicus (strain ATCC BAA-1280 / DSM 17508 / OCM 812 / Nankai-3)).